The sequence spans 672 residues: Glycerophosphocholine phosphodiesterase GPCPD1 (672 aa).

The region spanning 1 to 115 is the CBM20 domain; sequence MTPSQVAFEI…IIIDDGQFGI (115 aa). Substrate-binding positions include K70 and 88-89; that span reads HK. Residues S175 and S424 each carry the phosphoserine modification. Residues 318 to 618 form the GP-PDE domain; sequence PLDVGHRGAG…DRIYDWMPEQ (301 aa). Position 608 is a phosphotyrosine (Y608).

The protein belongs to the glycerophosphoryl diester phosphodiesterase family. As to expression, widely expressed, with highest expression in spinal chord.

It is found in the cytoplasm. Its subcellular location is the cytosol. It catalyses the reaction sn-glycerol 3-phosphocholine + H2O = sn-glycerol 3-phosphate + choline + H(+). In terms of biological role, may be involved in the negative regulation of skeletal muscle differentiation, independently of its glycerophosphocholine phosphodiesterase activity. This chain is Glycerophosphocholine phosphodiesterase GPCPD1 (GPCPD1), found in Homo sapiens (Human).